Consider the following 154-residue polypeptide: MHCPFCGNDETKVLESRQVEEGTAVRRRRECERCARRFTTFEKFEDTPLIVVKKDGRREEFSRGKLKAGILRACEKRPVSIEQIETLVYEIEKGLRNGSEREVQSKAIGEAVMNALVHLDEVAYIRFASVYREFKDVQRFLEELHELVEKKSSR.

The segment at 3–34 (CPFCGNDETKVLESRQVEEGTAVRRRRECERC) is a zinc-finger region. The ATP-cone domain maps to 49–139 (LIVVKKDGRR…VYREFKDVQR (91 aa)).

It belongs to the NrdR family. The cofactor is Zn(2+).

In terms of biological role, negatively regulates transcription of bacterial ribonucleotide reductase nrd genes and operons by binding to NrdR-boxes. The polypeptide is Transcriptional repressor NrdR (Desulfitobacterium hafniense (strain DSM 10664 / DCB-2)).